Reading from the N-terminus, the 207-residue chain is Octanoyltransferase (207 aa).

The BPL/LPL catalytic domain occupies 27–203; it reads ADTEDELWVV…HLETQLTPKA (177 aa). Substrate-binding positions include 66–73, 133–135, and 146–148; these read RGGQITYH, SLG, and GLA. Catalysis depends on C164, which acts as the Acyl-thioester intermediate.

The protein belongs to the LipB family.

It localises to the cytoplasm. The catalysed reaction is octanoyl-[ACP] + L-lysyl-[protein] = N(6)-octanoyl-L-lysyl-[protein] + holo-[ACP] + H(+). The protein operates within protein modification; protein lipoylation via endogenous pathway; protein N(6)-(lipoyl)lysine from octanoyl-[acyl-carrier-protein]: step 1/2. Its function is as follows. Catalyzes the transfer of endogenously produced octanoic acid from octanoyl-acyl-carrier-protein onto the lipoyl domains of lipoate-dependent enzymes. Lipoyl-ACP can also act as a substrate although octanoyl-ACP is likely to be the physiological substrate. This Neisseria gonorrhoeae (strain ATCC 700825 / FA 1090) protein is Octanoyltransferase.